The sequence spans 417 residues: Serine/threonine-protein phosphatase 4 regulatory subunit 2 (417 aa).

Polar residues-rich tracts occupy residues 140 to 149 (EKNNSSSLNR), 158 to 170 (NSPS…NING), and 186 to 196 (APMTTNGLPES). Residues 140-417 (EKNNSSSLNR…EVTDEPMEQD (278 aa)) are disordered. At S159 the chain carries Phosphoserine. Basic and acidic residues predominate over residues 197–213 (TDSKEANLQQNEEKSHS). Residues 214–226 (DSSTSESEVSSVS) show a composition bias toward low complexity. S226 bears the Phosphoserine mark. The segment covering 231 to 258 (KHPDEDAVEAEGHEVKRLRFDKEGEVRE) has biased composition (basic and acidic residues). Polar residues predominate over residues 259 to 269 (TASQTTSSEIS). A compositionally biased stretch (basic and acidic residues) spans 283–297 (QDKDKDSRCTRQHCT). The segment covering 298-311 (EEDEEEDEEEEEES) has biased composition (acidic residues). The span at 318–327 (MIPERKNQEK) shows a compositional bias: basic and acidic residues. A compositionally biased stretch (acidic residues) spans 338-350 (ETSEENNQMEESD). Basic and acidic residues predominate over residues 353–363 (QAEKDLLHSEG). Residues 385 to 399 (GSNSSKTGEILSESS) show a composition bias toward polar residues. The segment covering 400–417 (MENDDEATEVTDEPMEQD) has biased composition (acidic residues).

The protein belongs to the PPP4R2 family. Serine/threonine-protein phosphatase 4 (PP4) occurs in different assemblies of the catalytic and one or more regulatory subunits. Component of the PP4 complexes PPP4C-PPP4R2, PPP4C-PPP4R2-PPP4R3A and PPP4C-PPP4R2-PPP4R3B. The PPP4C-PPP4R2 complex appears to be a tetramer composed of 2 molecules of PPP4C and 2 molecules of PPP4R2. Interacts with DDX20/GEMIN3 and GEMIN4. Interacts with RPA2; this DNA damage-dependent interaction recruits PPP4C leading to RPA2 dephosphorylation.

It is found in the cytoplasm. It localises to the cytoskeleton. The protein resides in the microtubule organizing center. The protein localises to the centrosome. Its subcellular location is the nucleus. Regulatory subunit of serine/threonine-protein phosphatase 4 (PP4). May regulate the activity of PPP4C at centrosomal microtubule organizing centers. Its interaction with the SMN complex leads to enhance the temporal localization of snRNPs, suggesting a role of PPP4C in maturation of spliceosomal snRNPs. The PPP4C-PPP4R2-PPP4R3A PP4 complex specifically dephosphorylates H2AX phosphorylated on 'Ser-140' (gamma-H2AX) generated during DNA replication and required for DNA double strand break repair. Mediates RPA2 dephosphorylation by recruiting PPP4C to RPA2 in a DNA damage-dependent manner. RPA2 dephosphorylation is required for the efficient RPA2-mediated recruitment of RAD51 to chromatin following double strand breaks, an essential step for DNA repair. The polypeptide is Serine/threonine-protein phosphatase 4 regulatory subunit 2 (PPP4R2) (Pongo abelii (Sumatran orangutan)).